A 438-amino-acid polypeptide reads, in one-letter code: GTPase Der (438 aa).

EngA-type G domains follow at residues 4–169 (PVVA…PEKG) and 178–353 (IDVA…DQNS). GTP is bound by residues 10–17 (GRPNVGKS), 57–61 (DTGGI), 120–123 (NKVD), 184–191 (GKPNVGKS), 231–235 (DTAGL), and 296–299 (NKWD). The region spanning 354 to 438 (RRVKTGLLNE…PIRLKFKQKT (85 aa)) is the KH-like domain.

This sequence belongs to the TRAFAC class TrmE-Era-EngA-EngB-Septin-like GTPase superfamily. EngA (Der) GTPase family. In terms of assembly, associates with the 50S ribosomal subunit.

Its function is as follows. GTPase that plays an essential role in the late steps of ribosome biogenesis. In Halothermothrix orenii (strain H 168 / OCM 544 / DSM 9562), this protein is GTPase Der.